The following is a 100-amino-acid chain: MITKEEVKKIAKLARLKFEEDKVEEFSSRLSSIMDMIDILNEIDCTDVKPLTSVCDMQARMRPDEVTSKDHSNELFDNVQGASQQLAKEVKYFITPKVVE.

Belongs to the GatC family. As to quaternary structure, heterotrimer of A, B and C subunits.

It carries out the reaction L-glutamyl-tRNA(Gln) + L-glutamine + ATP + H2O = L-glutaminyl-tRNA(Gln) + L-glutamate + ADP + phosphate + H(+). The catalysed reaction is L-aspartyl-tRNA(Asn) + L-glutamine + ATP + H2O = L-asparaginyl-tRNA(Asn) + L-glutamate + ADP + phosphate + 2 H(+). Allows the formation of correctly charged Asn-tRNA(Asn) or Gln-tRNA(Gln) through the transamidation of misacylated Asp-tRNA(Asn) or Glu-tRNA(Gln) in organisms which lack either or both of asparaginyl-tRNA or glutaminyl-tRNA synthetases. The reaction takes place in the presence of glutamine and ATP through an activated phospho-Asp-tRNA(Asn) or phospho-Glu-tRNA(Gln). The protein is Aspartyl/glutamyl-tRNA(Asn/Gln) amidotransferase subunit C of Rickettsia bellii (strain RML369-C).